Consider the following 248-residue polypeptide: tRNA uridine(34) hydroxylase (248 aa).

The region spanning 128-222 (EGRPVVMLDT…YFEEVGGAHY (95 aa)) is the Rhodanese domain. The active-site Cysteine persulfide intermediate is the Cys182.

Belongs to the TrhO family.

The enzyme catalyses uridine(34) in tRNA + AH2 + O2 = 5-hydroxyuridine(34) in tRNA + A + H2O. Catalyzes oxygen-dependent 5-hydroxyuridine (ho5U) modification at position 34 in tRNAs. The protein is tRNA uridine(34) hydroxylase of Thiobacillus denitrificans (strain ATCC 25259 / T1).